The primary structure comprises 331 residues: UPF0324 membrane protein YdhF (331 aa).

The next 8 helical transmembrane spans lie at 2–20 (SILPGFLLSFAIAIVSYLL), 24–46 (IFHSLGSATIAILLGIILGNLYF), 82–104 (LGFSGVGFILIQMISTIIFVLFM), 114–136 (VSALMASGNAVCGSSAIAAVEPV), 148–170 (IAMVNLMGTILMLSLPFLGTWMF), 204–226 (TLATLFKIMRIIMLVFVVLYFGF), 247–269 (SFLPWYVLGFLVLCTLDTLIHFV), and 308–330 (LIYGLSTLVFQVVLALILISLLI).

It belongs to the UPF0324 family.

Its subcellular location is the cell membrane. This is UPF0324 membrane protein YdhF (ydhF) from Lactococcus lactis subsp. lactis (strain IL1403) (Streptococcus lactis).